We begin with the raw amino-acid sequence, 1705 residues long: Protein TIC 214 (1705 aa).

The next 5 helical transmembrane spans lie at 18–38 (IINS…FSIG), 67–87 (FITG…HLAL), 127–147 (LSIQ…HFIL), 175–195 (VGWI…LVWI), and 218–238 (SMSM…HYLG).

It belongs to the TIC214 family. As to quaternary structure, part of the Tic complex.

The protein resides in the plastid. It localises to the chloroplast inner membrane. Involved in protein precursor import into chloroplasts. May be part of an intermediate translocation complex acting as a protein-conducting channel at the inner envelope. The protein is Protein TIC 214 of Helianthus annuus (Common sunflower).